A 233-amino-acid polypeptide reads, in one-letter code: Phosphoenolpyruvate guanylyltransferase 1 (233 aa).

The phosphoenolpyruvate site is built by Thr154, Gly171, and Ser174.

This sequence belongs to the CofC family.

The enzyme catalyses phosphoenolpyruvate + GTP + H(+) = enolpyruvoyl-2-diphospho-5'-guanosine + diphosphate. It functions in the pathway cofactor biosynthesis; coenzyme F420 biosynthesis. Functionally, guanylyltransferase that catalyzes the activation of phosphoenolpyruvate (PEP) as enolpyruvoyl-2-diphospho-5'-guanosine, via the condensation of PEP with GTP. It is involved in the biosynthesis of coenzyme F420, a hydride carrier cofactor. The polypeptide is Phosphoenolpyruvate guanylyltransferase 1 (Rhodococcus jostii (strain RHA1)).